A 479-amino-acid chain; its full sequence is Cell division protein FtsA (479 aa).

Positions 417-458 (QGRQTERKENEQRDNTDRQREDTPKQTVKKKEKTGPSFGDKL) are disordered. Over residues 420 to 440 (QTERKENEQRDNTDRQREDTP) the composition is skewed to basic and acidic residues.

Belongs to the FtsA/MreB family. As to quaternary structure, self-interacts. Interacts with FtsZ.

It localises to the cell inner membrane. Functionally, cell division protein that is involved in the assembly of the Z ring. May serve as a membrane anchor for the Z ring. The polypeptide is Cell division protein FtsA (Porphyromonas gingivalis (strain ATCC BAA-308 / W83)).